A 326-amino-acid chain; its full sequence is Glutaredoxin 3 (326 aa).

One can recognise a Thioredoxin domain in the interval 1–108 (MANFTDAASL…LTNKVQRLGS (108 aa)). 2 consecutive Glutaredoxin domains span residues 125 to 227 (NQRL…VSLE) and 227 to 326 (ENRL…KGEN). [2Fe-2S] cluster contacts are provided by Cys-150 and Cys-252.

As to quaternary structure, homodimer; the homodimer is independent of 2Fe-2S clusters. Heterotrimer; forms a heterotrimeric complex composed by two bola2 molecules and one glrx3 molecule; linked by [2Fe-2S] clusters.

It localises to the cytoplasm. The protein localises to the cytosol. Functionally, together with bola2, acts as a cytosolic iron-sulfur (Fe-S) cluster assembly factor that facilitates [2Fe-2S] cluster insertion into a subset of cytosolic proteins. Required for hemoglobin maturation. Does not possess any thyoredoxin activity since it lacks the conserved motif that is essential for catalytic activity. The polypeptide is Glutaredoxin 3 (glrx3) (Danio rerio (Zebrafish)).